A 516-amino-acid polypeptide reads, in one-letter code: Putative protein NRT1/ PTR FAMILY 2.2 (516 aa).

A run of 11 helical transmembrane segments spans residues 31 to 51 (TLLG…VFLI), 67 to 87 (IVNG…DSFF), 90 to 110 (IPVI…LTMI), 138 to 158 (ILYI…FTLA), 174 to 194 (FFNW…TAIV), 201 to 221 (SWKL…IVFV), 320 to 340 (LLLA…LIIL), 362 to 382 (VIVI…VYPM), 394 to 414 (LQKV…SAIV), 437 to 457 (FIAS…ITLI), and 476 to 496 (VYWL…AWFY).

This sequence belongs to the major facilitator superfamily. Proton-dependent oligopeptide transporter (POT/PTR) (TC 2.A.17) family. As to expression, not detected.

The protein localises to the membrane. Functionally, transporter involved in a passive nitrate efflux. The sequence is that of Putative protein NRT1/ PTR FAMILY 2.2 (NPF2.2) from Arabidopsis thaliana (Mouse-ear cress).